Reading from the N-terminus, the 1792-residue chain is Protein TIC 214 (1792 aa).

6 consecutive transmembrane segments (helical) span residues 18-38, 64-84, 87-107, 129-149, 165-185, and 221-241; these read IINS…FSIG, FITG…HLAL, PHII…GNNH, IFFH…SSIL, IFLI…MKWI, and IFLV…PPPF.

The protein belongs to the TIC214 family. As to quaternary structure, part of the Tic complex.

Its subcellular location is the plastid. It is found in the chloroplast inner membrane. Functionally, involved in protein precursor import into chloroplasts. May be part of an intermediate translocation complex acting as a protein-conducting channel at the inner envelope. The protein is Protein TIC 214 of Glycine max (Soybean).